We begin with the raw amino-acid sequence, 472 residues long: Aspartyl/glutamyl-tRNA(Asn/Gln) amidotransferase subunit B (472 aa).

It belongs to the GatB/GatE family. GatB subfamily. As to quaternary structure, heterotrimer of A, B and C subunits.

The enzyme catalyses L-glutamyl-tRNA(Gln) + L-glutamine + ATP + H2O = L-glutaminyl-tRNA(Gln) + L-glutamate + ADP + phosphate + H(+). It carries out the reaction L-aspartyl-tRNA(Asn) + L-glutamine + ATP + H2O = L-asparaginyl-tRNA(Asn) + L-glutamate + ADP + phosphate + 2 H(+). Allows the formation of correctly charged Asn-tRNA(Asn) or Gln-tRNA(Gln) through the transamidation of misacylated Asp-tRNA(Asn) or Glu-tRNA(Gln) in organisms which lack either or both of asparaginyl-tRNA or glutaminyl-tRNA synthetases. The reaction takes place in the presence of glutamine and ATP through an activated phospho-Asp-tRNA(Asn) or phospho-Glu-tRNA(Gln). The sequence is that of Aspartyl/glutamyl-tRNA(Asn/Gln) amidotransferase subunit B from Campylobacter jejuni subsp. jejuni serotype O:23/36 (strain 81-176).